A 611-amino-acid chain; its full sequence is Dihydroxy-acid dehydratase (611 aa).

D81 lines the Mg(2+) pocket. C122 is a binding site for [2Fe-2S] cluster. Mg(2+) is bound by residues D123 and K124. K124 is modified (N6-carboxylysine). C195 lines the [2Fe-2S] cluster pocket. E491 lines the Mg(2+) pocket. The Proton acceptor role is filled by S517.

Belongs to the IlvD/Edd family. In terms of assembly, homodimer. The cofactor is [2Fe-2S] cluster. Mg(2+) is required as a cofactor.

The enzyme catalyses (2R)-2,3-dihydroxy-3-methylbutanoate = 3-methyl-2-oxobutanoate + H2O. It carries out the reaction (2R,3R)-2,3-dihydroxy-3-methylpentanoate = (S)-3-methyl-2-oxopentanoate + H2O. It participates in amino-acid biosynthesis; L-isoleucine biosynthesis; L-isoleucine from 2-oxobutanoate: step 3/4. Its pathway is amino-acid biosynthesis; L-valine biosynthesis; L-valine from pyruvate: step 3/4. In terms of biological role, functions in the biosynthesis of branched-chain amino acids. Catalyzes the dehydration of (2R,3R)-2,3-dihydroxy-3-methylpentanoate (2,3-dihydroxy-3-methylvalerate) into 2-oxo-3-methylpentanoate (2-oxo-3-methylvalerate) and of (2R)-2,3-dihydroxy-3-methylbutanoate (2,3-dihydroxyisovalerate) into 2-oxo-3-methylbutanoate (2-oxoisovalerate), the penultimate precursor to L-isoleucine and L-valine, respectively. This is Dihydroxy-acid dehydratase from Glaesserella parasuis serovar 5 (strain SH0165) (Haemophilus parasuis).